Here is a 138-residue protein sequence, read N- to C-terminus: Cysteine desulfuration protein SufE (138 aa).

The active-site Cysteine persulfide intermediate is C51.

It belongs to the SufE family. In terms of assembly, homodimer. Interacts with SufS.

The protein resides in the cytoplasm. The protein operates within cofactor biosynthesis; iron-sulfur cluster biosynthesis. Participates in cysteine desulfuration mediated by SufS. Cysteine desulfuration mobilizes sulfur from L-cysteine to yield L-alanine and constitutes an essential step in sulfur metabolism for biosynthesis of a variety of sulfur-containing biomolecules. Functions as a sulfur acceptor for SufS, by mediating the direct transfer of the sulfur atom from the S-sulfanylcysteine of SufS, an intermediate product of cysteine desulfuration process. This is Cysteine desulfuration protein SufE from Shigella boydii serotype 18 (strain CDC 3083-94 / BS512).